A 174-amino-acid chain; its full sequence is Methylated-DNA--protein-cysteine methyltransferase (174 aa).

The active-site Nucleophile; methyl group acceptor is C144.

This sequence belongs to the MGMT family.

The protein localises to the cytoplasm. It carries out the reaction a 6-O-methyl-2'-deoxyguanosine in DNA + L-cysteinyl-[protein] = S-methyl-L-cysteinyl-[protein] + a 2'-deoxyguanosine in DNA. The catalysed reaction is a 4-O-methyl-thymidine in DNA + L-cysteinyl-[protein] = a thymidine in DNA + S-methyl-L-cysteinyl-[protein]. Functionally, involved in the cellular defense against the biological effects of O6-methylguanine (O6-MeG) and O4-methylthymine (O4-MeT) in DNA. Repairs the methylated nucleobase in DNA by stoichiometrically transferring the methyl group to a cysteine residue in the enzyme. This is a suicide reaction: the enzyme is irreversibly inactivated. This is Methylated-DNA--protein-cysteine methyltransferase from Pyrococcus furiosus (strain ATCC 43587 / DSM 3638 / JCM 8422 / Vc1).